Reading from the N-terminus, the 515-residue chain is MDAQTKVIIIDYGSQVTQLIARRVREAGVYSEIHPCIVTAEQVRAMKPAAIILSGGPASVGEKDAPALEKGLLDLGVPVLGICYGMQLLGQDLGGELATSETREYGPADLTLTAPCPLWDGLDLGTTSRVWMSHGDKVKTPPPGFKVVGRTATLEVAAMADEARRIYAVQFHPEVHHSEDGARIINNFLFHVAKLKADWTMSSFVERAVKEMAEVVGDRHVVCALSGGIDSTVVAVLLHKAIGKQLHCIFVDNGVLRLNEGQEVVDYLREHFDLNLKYVQAQERFLSKLHGVDDPEQKRKIIGYTFIEVFDEEAKALGHVDFLAQGTLYPDVIESVSHKGPSAVIKSHHNVGGLPEKMNLKLIEPLRELFKDEVRKVAAELGLPDFIIWRHPFPGPGLAIRVIGEITEERLDILRRADKVVQQELMSSGWYRKVWQGFAVLLPLKTVGVMGDGRTYEHVIALRIVDSVDAMTADWARLPSELLERISSRIINEVKGVNRVVYDISSKPPSTIEWE.

The Glutamine amidotransferase type-1 domain maps to 6–198 (KVIIIDYGSQ…LFHVAKLKAD (193 aa)). The active-site Nucleophile is Cys83. Residues His172 and Glu174 contribute to the active site. Positions 199–390 (WTMSSFVERA…LGLPDFIIWR (192 aa)) constitute a GMPS ATP-PPase domain. 226–232 (SGGIDST) provides a ligand contact to ATP.

In terms of assembly, homodimer.

It catalyses the reaction XMP + L-glutamine + ATP + H2O = GMP + L-glutamate + AMP + diphosphate + 2 H(+). Its pathway is purine metabolism; GMP biosynthesis; GMP from XMP (L-Gln route): step 1/1. Functionally, catalyzes the synthesis of GMP from XMP. The protein is GMP synthase [glutamine-hydrolyzing] of Nitratidesulfovibrio vulgaris (strain DP4) (Desulfovibrio vulgaris).